The sequence spans 367 residues: tRNA-specific 2-thiouridylase MnmA (367 aa).

Residues 11–18 and L37 each bind ATP; that span reads GLSGGVDS. The active-site Nucleophile is C99. Cysteines 99 and 195 form a disulfide. An ATP-binding site is contributed by G123. Residues 145–147 are interaction with tRNA; it reads KDQ. The Cysteine persulfide intermediate role is filled by C195. The interaction with tRNA stretch occupies residues 304–305; sequence RY.

It belongs to the MnmA/TRMU family.

The protein resides in the cytoplasm. The catalysed reaction is S-sulfanyl-L-cysteinyl-[protein] + uridine(34) in tRNA + AH2 + ATP = 2-thiouridine(34) in tRNA + L-cysteinyl-[protein] + A + AMP + diphosphate + H(+). In terms of biological role, catalyzes the 2-thiolation of uridine at the wobble position (U34) of tRNA, leading to the formation of s(2)U34. The chain is tRNA-specific 2-thiouridylase MnmA from Chlorobium luteolum (strain DSM 273 / BCRC 81028 / 2530) (Pelodictyon luteolum).